We begin with the raw amino-acid sequence, 244 residues long: MTVVEIKSQDQFTQLTTTNAANKLIVLYFKAQWADPCKTMSQVLEAVSEKVRQEDVRFLSIDADEHPEISDLFEIAAVPYFVFIQNGTIVKEISAADPKEFVKSLEILSNASASLANNAKGPKSTSDEESSGSSDDEEDETEEEINARLVKLVQAAPVMLFMKGSPSEPKCGFSRQLVGILREHQIRFGFFDILRDENVRQSLKKFSDWPTFPQLYINGEFQGGLDIIKESIEEDPEYFQHALQ.

Residues 3-110 enclose the Thioredoxin domain; the sequence is VVEIKSQDQF…FVKSLEILSN (108 aa). The interval 116-143 is disordered; it reads ANNAKGPKSTSDEESSGSSDDEEDETEE. A compositionally biased stretch (acidic residues) spans 127 to 143; sequence DEESSGSSDDEEDETEE. Residues 146–244 form the Glutaredoxin domain; sequence NARLVKLVQA…DPEYFQHALQ (99 aa). Lys163 contributes to the glutathione binding site. Position 171 (Cys171) interacts with [2Fe-2S] cluster. Glutathione contacts are provided by residues Arg200, Phe212, and 225 to 226; that span reads LD.

The protein belongs to the glutaredoxin family. Monothiol subfamily. In terms of assembly, homodimer. Heterodimer with FRA2.

Monothiol glutaredoxin involved in the biogenesis of iron-sulfur clusters. Binds one iron-sulfur cluster per dimer. The iron-sulfur cluster is bound between subunits, and is complexed by a bound glutathione and a cysteine residue from each subunit. This chain is Monothiol glutaredoxin-4 (GRX4), found in Saccharomyces cerevisiae (strain ATCC 204508 / S288c) (Baker's yeast).